Consider the following 1278-residue polypeptide: ABC transporter B family member 11 (1278 aa).

Basic and acidic residues-rich tracts occupy residues 1–13 (MNGDGAREGDSVS) and 21–35 (SPKEGEETKKEEKSE). Residues 1 to 35 (MNGDGAREGDSVSHEPSTSKSPKEGEETKKEEKSE) form a disordered region. Helical transmembrane passes span 55-75 (VLLMICGSIGAIGNGMSLPFM), 106-126 (FVYLGLGTLGAAFLQVACWMI), 182-202 (FIQLVSTFVGGFVLAFIKGWL), 205-225 (LVMLTSIPLLAMAGAAMALIV), 285-305 (GLGLGVMFFVFFSSYALAIWF), and 314-334 (GYTGGAVINVIIIVVAGSMSL). The ABC transmembrane type-1 1 domain maps to 58-346 (MICGSIGAIG…TSPCVTAFAA (289 aa)). Residues 381–617 (IELKDVHFSY…SEGAYSQLIR (237 aa)) form the ABC transporter 1 domain. 416–423 (GESGSGKS) lines the ATP pocket. Asn-483, Asn-568, and Asn-653 each carry an N-linked (GlcNAc...) asparagine glycan. Polar residues predominate over residues 629–654 (ELSSGSSFRNSNLKKSMEGTSSVGNS). Residues 629 to 656 (ELSSGSSFRNSNLKKSMEGTSSVGNSSR) are disordered. Residues 710 to 997 (LLLGTVAAAI…SSTFAPDSSK (288 aa)) enclose the ABC transmembrane type-1 2 domain. The next 2 helical transmembrane spans lie at 711-731 (LLGTVAAAINGAIFPLFGILI) and 751-771 (FWAIIFVALGVTSLIVSPTQM). Asn-806 carries an N-linked (GlcNAc...) asparagine glycan. A run of 4 helical transmembrane segments spans residues 824 to 844 (ALVGDALSLAVQNVASAASGL), 845 to 865 (IIAFTASWELALIILVMLPLI), 932 to 952 (GFISGLGFGFSFFILFCVYAT), and 971 to 991 (VFQVFFALTMAAIGISQSSTF). In terms of domain architecture, ABC transporter 2 spans 1032 to 1271 (IELRHLSFTY…EGGVYASLVQ (240 aa)). 1067–1074 (GESGSGKS) is an ATP binding site. Residues Asn-1121 and Asn-1222 are each glycosylated (N-linked (GlcNAc...) asparagine).

It belongs to the ABC transporter superfamily. ABCB family. Multidrug resistance exporter (TC 3.A.1.201) subfamily. Present in roots and flower buds.

Its subcellular location is the membrane. It carries out the reaction (indol-3-yl)acetate(in) + ATP + H2O = (indol-3-yl)acetate(out) + ADP + phosphate + H(+). Functionally, involved in the regulation of auxin transport required for pistil elongation. The chain is ABC transporter B family member 11 from Arabidopsis thaliana (Mouse-ear cress).